The following is a 415-amino-acid chain: Serine hydroxymethyltransferase 2 (415 aa).

Residues L121 and 125–127 (GHL) each bind (6S)-5,6,7,8-tetrahydrofolate. K229 carries the post-translational modification N6-(pyridoxal phosphate)lysine.

The protein belongs to the SHMT family. In terms of assembly, homodimer. Requires pyridoxal 5'-phosphate as cofactor.

It localises to the cytoplasm. The enzyme catalyses (6R)-5,10-methylene-5,6,7,8-tetrahydrofolate + glycine + H2O = (6S)-5,6,7,8-tetrahydrofolate + L-serine. It functions in the pathway one-carbon metabolism; tetrahydrofolate interconversion. Its pathway is amino-acid biosynthesis; glycine biosynthesis; glycine from L-serine: step 1/1. Catalyzes the reversible interconversion of serine and glycine with tetrahydrofolate (THF) serving as the one-carbon carrier. This reaction serves as the major source of one-carbon groups required for the biosynthesis of purines, thymidylate, methionine, and other important biomolecules. Also exhibits THF-independent aldolase activity toward beta-hydroxyamino acids, producing glycine and aldehydes, via a retro-aldol mechanism. This Bordetella parapertussis (strain 12822 / ATCC BAA-587 / NCTC 13253) protein is Serine hydroxymethyltransferase 2.